A 287-amino-acid polypeptide reads, in one-letter code: Energy-coupling factor transporter ATP-binding protein EcfA2 (287 aa).

Residues 3 to 245 (IKFENVSYVY…SEWLQKHHLA (243 aa)) form the ABC transporter domain. 40–47 (GHTGSGKS) is an ATP binding site.

Belongs to the ABC transporter superfamily. Energy-coupling factor EcfA family. Forms a stable energy-coupling factor (ECF) transporter complex composed of 2 membrane-embedded substrate-binding proteins (S component), 2 ATP-binding proteins (A component) and 2 transmembrane proteins (T component).

The protein resides in the cell membrane. Its function is as follows. ATP-binding (A) component of a common energy-coupling factor (ECF) ABC-transporter complex. Unlike classic ABC transporters this ECF transporter provides the energy necessary to transport a number of different substrates. This is Energy-coupling factor transporter ATP-binding protein EcfA2 from Lactobacillus delbrueckii subsp. bulgaricus (strain ATCC 11842 / DSM 20081 / BCRC 10696 / JCM 1002 / NBRC 13953 / NCIMB 11778 / NCTC 12712 / WDCM 00102 / Lb 14).